We begin with the raw amino-acid sequence, 344 residues long: Acireductone dioxygenase (344 aa).

The Fe(2+) site is built by histidine 92, histidine 94, glutamate 98, and histidine 137. Residues histidine 92, histidine 94, glutamate 98, and histidine 137 each coordinate Ni(2+).

Belongs to the acireductone dioxygenase (ARD) family. Fe(2+) is required as a cofactor. Ni(2+) serves as cofactor.

The protein resides in the cytoplasm. It localises to the nucleus. It carries out the reaction 1,2-dihydroxy-5-(methylsulfanyl)pent-1-en-3-one + O2 = 4-methylsulfanyl-2-oxobutanoate + formate + 2 H(+). The enzyme catalyses 1,2-dihydroxy-5-(methylsulfanyl)pent-1-en-3-one + O2 = 3-(methylsulfanyl)propanoate + CO + formate + 2 H(+). It participates in amino-acid biosynthesis; L-methionine biosynthesis via salvage pathway; L-methionine from S-methyl-5-thio-alpha-D-ribose 1-phosphate: step 5/6. Catalyzes 2 different reactions between oxygen and the acireductone 1,2-dihydroxy-3-keto-5-methylthiopentene (DHK-MTPene) depending upon the metal bound in the active site. Fe-containing acireductone dioxygenase (Fe-ARD) produces formate and 2-keto-4-methylthiobutyrate (KMTB), the alpha-ketoacid precursor of methionine in the methionine recycle pathway. Ni-containing acireductone dioxygenase (Ni-ARD) produces methylthiopropionate, carbon monoxide and formate, and does not lie on the methionine recycle pathway. This is Acireductone dioxygenase from Leishmania infantum.